Consider the following 517-residue polypeptide: Serine O-succinyltransferase (517 aa).

The transit peptide at 1 to 46 (MSPLNGVARSLPRPFQAVARRPFRVAQPAVACPSNRRSFNHSRSLR) directs the protein to the mitochondrion. The segment at 34 to 66 (SNRRSFNHSRSLRSTGSQSPAPSPRDSSNPALS) is disordered. Positions 45 to 64 (LRSTGSQSPAPSPRDSSNPA) are enriched in polar residues. Residues 134–386 (NVILLHTGLS…LTQQLATKKQ (253 aa)) enclose the AB hydrolase-1 domain. The segment at 141–144 (GLSA) is important for substrate specificity. Residue Ser238 is the Nucleophile of the active site. Arg307 contacts substrate. The disordered stretch occupies residues 413–436 (QPYQEQPSASTSAEQSASASETGS). Low complexity predominate over residues 416–436 (QEQPSASTSAEQSASASETGS). Residues Asp461 and His498 contribute to the active site. Asp499 contacts substrate.

It belongs to the AB hydrolase superfamily. MetX family.

The protein resides in the mitochondrion. It carries out the reaction succinyl-CoA + L-serine = O-succinyl-L-serine + CoA. Its pathway is amino-acid biosynthesis; L-cysteine biosynthesis; L-cysteine from L-serine: step 1/2. Its function is as follows. Transfers a succinyl group from succinyl-CoA to L-serine, forming succinyl-L-serine. Also has weak serine acetyl transferase activity and homoserine succinyl transferase activity. The polypeptide is Serine O-succinyltransferase (Emericella nidulans (Aspergillus nidulans)).